The primary structure comprises 521 residues: Transcription activator of gluconeogenesis SS1G_02293 (521 aa).

Residues 1-12 show a composition bias toward acidic residues; it reads MSGETEIDDPEV. Residues 1-75 are disordered; that stretch reads MSGETEIDDP…KFDPKDPLRP (75 aa). 2 stretches are compositionally biased toward basic and acidic residues: residues 21–49 and 65–74; these read YSDH…RPDG and PKFDPKDPLR. A DNA-binding region (zn(2)-C6 fungal-type) is located at residues 84–112; the sequence is CFACQRAHLTCGDERPCQRCIKRGLADAC. Disordered stretches follow at residues 273–308, 322–358, and 478–501; these read SGSA…NPPF, VAPP…RDPS, and NTGN…PRMR. Residues 275–287 are compositionally biased toward polar residues; the sequence is SAETPPQDSSAGM. Low complexity-rich tracts occupy residues 297 to 308, 337 to 351, and 480 to 494; these read NNNPAFNNNPPF, KSGP…SALG, and GNSG…GRGS. Positions 426–497 constitute a PAS domain; the sequence is TLFEYEDFML…GSSGRGSFTT (72 aa).

This sequence belongs to the ERT1/acuK family.

It is found in the nucleus. Transcription factor which regulates nonfermentable carbon utilization. Activator of gluconeogenetic genes. This is Transcription activator of gluconeogenesis SS1G_02293 from Sclerotinia sclerotiorum (strain ATCC 18683 / 1980 / Ss-1) (White mold).